The following is a 146-amino-acid chain: uncharacterized protein (146 aa).

The next 5 membrane-spanning stretches (helical) occupy residues 5–27 (GAMV…YGLA), 32–49 (FVYV…YIIL), 61–80 (LAVM…FFSG), 90–108 (SLGL…ARVF), and 120–142 (FFLK…MLFL).

Its subcellular location is the cell membrane. This is an uncharacterized protein from Archaeoglobus fulgidus (strain ATCC 49558 / DSM 4304 / JCM 9628 / NBRC 100126 / VC-16).